The following is a 1436-amino-acid chain: Inositol hexakisphosphate and diphosphoinositol-pentakisphosphate kinase 1 (1436 aa).

64–65 contributes to the substrate binding site; that stretch reads KK. Residues R145, K198, H205, R224, 248–251, and 257–259 contribute to the ATP site; these read EEFM and DVK. Position 224–225 (224–225) interacts with substrate; that stretch reads RK. Substrate-binding residues include K259 and R273. Residues S275, D320, and 332 to 334 each bind ATP; that span reads DVN. 337 to 340 is a substrate binding site; the sequence is SFVK. The segment at 382-453 is polyphosphoinositide-binding domain; that stretch reads PTTSGTMMEL…VLDITRLLLA (72 aa). The interval 915–998 is disordered; it reads GSAPAGCGFR…TSSSRPGGYR (84 aa). A phosphoserine mark is found at S939, S982, S1032, S1068, S1140, and S1147. Disordered regions lie at residues 1131-1191 and 1389-1436; these read NHQA…GFSD and SELS…EAIS. The span at 1163 to 1181 shows a compositional bias: low complexity; that stretch reads SSGPSSTVSSAGPSSPTTV. The span at 1405-1436 shows a compositional bias: acidic residues; it reads LSEETELQAQEVSEEIDQESEVVDELPPEAIS.

Belongs to the histidine acid phosphatase family. VIP1 subfamily.

Its subcellular location is the cytoplasm. The protein localises to the cytosol. It localises to the cell membrane. The catalysed reaction is 1D-myo-inositol hexakisphosphate + ATP = 1-diphospho-1D-myo-inositol 2,3,4,5,6-pentakisphosphate + ADP. It carries out the reaction 5-diphospho-1D-myo-inositol 1,2,3,4,6-pentakisphosphate + ATP + H(+) = 1,5-bis(diphospho)-1D-myo-inositol 2,3,4,6-tetrakisphosphate + ADP. Functionally, bifunctional inositol kinase that acts in concert with the IP6K kinases IP6K1, IP6K2 and IP6K3 to synthesize the diphosphate group-containing inositol pyrophosphates diphosphoinositol pentakisphosphate, PP-InsP5, and bis-diphosphoinositol tetrakisphosphate, (PP)2-InsP4. PP-InsP5 and (PP)2-InsP4, also respectively called InsP7 and InsP8, regulate a variety of cellular processes, including apoptosis, vesicle trafficking, cytoskeletal dynamics, exocytosis, insulin signaling and neutrophil activation. Phosphorylates inositol hexakisphosphate (InsP6) at position 1 to produce PP-InsP5 which is in turn phosphorylated by IP6Ks to produce (PP)2-InsP4. Alternatively, phosphorylates PP-InsP5 at position 1, produced by IP6Ks from InsP6, to produce (PP)2-InsP4. Activated when cells are exposed to hyperosmotic stress. The chain is Inositol hexakisphosphate and diphosphoinositol-pentakisphosphate kinase 1 from Mus musculus (Mouse).